A 587-amino-acid chain; its full sequence is Aspartate--tRNA ligase (587 aa).

Glu173 lines the L-aspartate pocket. The aspartate stretch occupies residues 197–200 (QTLK). Arg219 is a binding site for L-aspartate. ATP is bound by residues 219 to 221 (RDE) and Gln228. His446 serves as a coordination point for L-aspartate. Position 480 (Glu480) interacts with ATP. L-aspartate is bound at residue Arg487. 532-535 (GLDR) is a binding site for ATP.

It belongs to the class-II aminoacyl-tRNA synthetase family. Type 1 subfamily. Homodimer.

The protein resides in the cytoplasm. The enzyme catalyses tRNA(Asp) + L-aspartate + ATP = L-aspartyl-tRNA(Asp) + AMP + diphosphate. In terms of biological role, catalyzes the attachment of L-aspartate to tRNA(Asp) in a two-step reaction: L-aspartate is first activated by ATP to form Asp-AMP and then transferred to the acceptor end of tRNA(Asp). This chain is Aspartate--tRNA ligase, found in Bacteroides thetaiotaomicron (strain ATCC 29148 / DSM 2079 / JCM 5827 / CCUG 10774 / NCTC 10582 / VPI-5482 / E50).